The chain runs to 330 residues: tRNA U34 carboxymethyltransferase (330 aa).

Carboxy-S-adenosyl-L-methionine contacts are provided by residues K91, W105, K110, G130, 152–154 (DPS), 181–182 (IE), M196, Y200, and R315.

The protein belongs to the class I-like SAM-binding methyltransferase superfamily. CmoB family. Homotetramer.

The enzyme catalyses carboxy-S-adenosyl-L-methionine + 5-hydroxyuridine(34) in tRNA = 5-carboxymethoxyuridine(34) in tRNA + S-adenosyl-L-homocysteine + H(+). Functionally, catalyzes carboxymethyl transfer from carboxy-S-adenosyl-L-methionine (Cx-SAM) to 5-hydroxyuridine (ho5U) to form 5-carboxymethoxyuridine (cmo5U) at position 34 in tRNAs. The sequence is that of tRNA U34 carboxymethyltransferase from Shewanella woodyi (strain ATCC 51908 / MS32).